We begin with the raw amino-acid sequence, 176 residues long: Peptide deformylase (176 aa).

Fe cation-binding residues include cysteine 94 and histidine 136. Residue glutamate 137 is part of the active site. Histidine 140 serves as a coordination point for Fe cation.

Belongs to the polypeptide deformylase family. Fe(2+) is required as a cofactor.

It carries out the reaction N-terminal N-formyl-L-methionyl-[peptide] + H2O = N-terminal L-methionyl-[peptide] + formate. Its function is as follows. Removes the formyl group from the N-terminal Met of newly synthesized proteins. Requires at least a dipeptide for an efficient rate of reaction. N-terminal L-methionine is a prerequisite for activity but the enzyme has broad specificity at other positions. This chain is Peptide deformylase, found in Bartonella henselae (strain ATCC 49882 / DSM 28221 / CCUG 30454 / Houston 1) (Rochalimaea henselae).